The following is a 461-amino-acid chain: Anthranilate synthase component 1 (461 aa).

Residues Ser-43 and 238 to 240 each bind L-tryptophan; that span reads PYM. 273 to 274 serves as a coordination point for chorismate; that stretch reads GT. Glu-300 contacts Mg(2+). Chorismate contacts are provided by residues Tyr-388, Arg-408, 422-424, and Gly-424; that span reads GAG. Mg(2+) is bound at residue Glu-437.

Belongs to the anthranilate synthase component I family. As to quaternary structure, heterotetramer consisting of two non-identical subunits: a beta subunit (TrpG) and a large alpha subunit (TrpE). The cofactor is Mg(2+).

The enzyme catalyses chorismate + L-glutamine = anthranilate + pyruvate + L-glutamate + H(+). The protein operates within amino-acid biosynthesis; L-tryptophan biosynthesis; L-tryptophan from chorismate: step 1/5. With respect to regulation, feedback inhibited by tryptophan. Functionally, part of a heterotetrameric complex that catalyzes the two-step biosynthesis of anthranilate, an intermediate in the biosynthesis of L-tryptophan. In the first step, the glutamine-binding beta subunit (TrpG) of anthranilate synthase (AS) provides the glutamine amidotransferase activity which generates ammonia as a substrate that, along with chorismate, is used in the second step, catalyzed by the large alpha subunit of AS (TrpE) to produce anthranilate. In the absence of TrpG, TrpE can synthesize anthranilate directly from chorismate and high concentrations of ammonia. This is Anthranilate synthase component 1 (trpE) from Methanothermobacter marburgensis (strain ATCC BAA-927 / DSM 2133 / JCM 14651 / NBRC 100331 / OCM 82 / Marburg) (Methanobacterium thermoautotrophicum).